Consider the following 129-residue polypeptide: Small ribosomal subunit protein uS9 (129 aa).

Belongs to the universal ribosomal protein uS9 family.

The polypeptide is Small ribosomal subunit protein uS9 (Chlorobium chlorochromatii (strain CaD3)).